Reading from the N-terminus, the 395-residue chain is NAD(P)H-quinone oxidoreductase subunit H, chloroplastic (395 aa).

Belongs to the complex I 49 kDa subunit family. NDH is composed of at least 16 different subunits, 5 of which are encoded in the nucleus.

It is found in the plastid. It localises to the chloroplast thylakoid membrane. It carries out the reaction a plastoquinone + NADH + (n+1) H(+)(in) = a plastoquinol + NAD(+) + n H(+)(out). It catalyses the reaction a plastoquinone + NADPH + (n+1) H(+)(in) = a plastoquinol + NADP(+) + n H(+)(out). NDH shuttles electrons from NAD(P)H:plastoquinone, via FMN and iron-sulfur (Fe-S) centers, to quinones in the photosynthetic chain and possibly in a chloroplast respiratory chain. The immediate electron acceptor for the enzyme in this species is believed to be plastoquinone. Couples the redox reaction to proton translocation, and thus conserves the redox energy in a proton gradient. The chain is NAD(P)H-quinone oxidoreductase subunit H, chloroplastic from Dioscorea elephantipes (Elephant's foot yam).